A 332-amino-acid polypeptide reads, in one-letter code: GDP-mannose transporter 2 (332 aa).

The Cytoplasmic portion of the chain corresponds to 1 to 12 (MSSLKVSQQDKK). Residues 13–33 (WVNSGSVAILAYCASSILMTI) traverse the membrane as a helical segment. Over 34–47 (TNKVVMSDRTFNMN) the chain is Lumenal. The chain crosses the membrane as a helical span at residues 48–68 (FLLLFIQSLVCVITLLVLKVL). The Cytoplasmic portion of the chain corresponds to 69-84 (GSVNFRSFNKTDARNW). Residues 85–105 (FPISICLVLMIFTSSKSLQYL) form a helical membrane-spanning segment. The Lumenal segment spans residues 106-108 (SVP). The helical transmembrane segment at 109-129 (VYTIFKNLTIIVIAYGEVLFF) threads the bilayer. Topologically, residues 130–131 (GS) are cytoplasmic. The helical transmembrane segment at 132–152 (SVGNMELGSFALMIVSSLIAA) threads the bilayer. The Lumenal segment spans residues 153-174 (HGDYLHSVERLKKMLGPNVSFS). N-linked (GlcNAc...) asparagine glycosylation occurs at Asn-170. A helical membrane pass occupies residues 175–195 (FIVNIGYFWIAANCFASALFV). Residues 196–211 (LLMRKRIQVTNFKDFD) lie on the Cytoplasmic side of the membrane. A helical transmembrane segment spans residues 212–232 (TMFYNNVLSLPLLLLGSYLFE). Residues 233-248 (DWSQENLLPHVDIDNL) are Lumenal-facing. Asn-247 carries an N-linked (GlcNAc...) asparagine glycan. The chain crosses the membrane as a helical span at residues 249 to 269 (STMIISGLASVAISYCSGWCV). Topologically, residues 270-274 (RVTSS) are cytoplasmic. The helical transmembrane segment at 275-295 (TTYSMVGALNKLPIALTGFLF) threads the bilayer. Over 296–300 (NDAAR) the chain is Lumenal. The chain crosses the membrane as a helical span at residues 301–321 (NLSSAASILLGFASGIIYAVA). Over 322 to 332 (KQKKLQNSEKI) the chain is Cytoplasmic.

Belongs to the TPT transporter family. SLC35D subfamily. In terms of assembly, homooligomer.

Its subcellular location is the golgi apparatus membrane. It is found in the cytoplasmic vesicle membrane. It localises to the endoplasmic reticulum membrane. In terms of biological role, involved in the import of GDP-mannose from the cytoplasm into the Golgi lumen. The chain is GDP-mannose transporter 2 (VRG4-2) from Vanderwaltozyma polyspora (strain ATCC 22028 / DSM 70294 / BCRC 21397 / CBS 2163 / NBRC 10782 / NRRL Y-8283 / UCD 57-17) (Kluyveromyces polysporus).